A 176-amino-acid chain; its full sequence is 3-hydroxyanthranilate 3,4-dioxygenase (176 aa).

R44 serves as a coordination point for O2. Residues H48, E54, and H92 each coordinate Fe cation. E54 serves as a coordination point for substrate. The substrate site is built by R96 and E106. Positions 121, 124, 158, and 161 each coordinate Fe cation.

Belongs to the 3-HAO family. Homodimer. It depends on Fe(2+) as a cofactor.

It carries out the reaction 3-hydroxyanthranilate + O2 = (2Z,4Z)-2-amino-3-carboxymuconate 6-semialdehyde. Its pathway is cofactor biosynthesis; NAD(+) biosynthesis; quinolinate from L-kynurenine: step 3/3. In terms of biological role, catalyzes the oxidative ring opening of 3-hydroxyanthranilate to 2-amino-3-carboxymuconate semialdehyde, which spontaneously cyclizes to quinolinate. In Xanthomonas euvesicatoria pv. vesicatoria (strain 85-10) (Xanthomonas campestris pv. vesicatoria), this protein is 3-hydroxyanthranilate 3,4-dioxygenase.